The sequence spans 348 residues: MRALSKQQPGEGIWMIETEVPTPGPNDLLIRIRKGSICGTDVHIYKWDDWASQTVPVPMVVGHEYVGVVAGMGSEVRGFEIGDRVSGEGHVTCGHCRNCRAGRRHLCRNTQGVGVNRPGSFAEYLVLPAFNAFKLPDDIPDDVAAIFDPFGNAVHTALSFDLVGEDVLITGAGPIGCMAAAVARHVGARNVVITDVNDYRLDLARQMGVTRAVNVAREDLWTVATQELDMHEGFDVGMEMSGSGPAFAQMVSVMNNGGKVALLGIPSGEVQIDWNAVIFKMLTIKGIYGREMFETWYKMAALIQSGLDLTPVITHHYGIGDFQQGFDAMLSGQSGKVILDWETEEQSA.

Residue Cys-38 participates in Zn(2+) binding. Active-site charge relay system residues include Thr-40 and His-43. 6 residues coordinate Zn(2+): His-63, Glu-64, Cys-93, Cys-96, Cys-99, and Cys-107. Residues Ile-175, Asp-195, Arg-200, 263–265 (LGI), and 287–288 (IY) each bind NAD(+).

The protein belongs to the zinc-containing alcohol dehydrogenase family. Homotetramer. Zn(2+) is required as a cofactor.

The protein resides in the cytoplasm. It catalyses the reaction L-threonine + NAD(+) = (2S)-2-amino-3-oxobutanoate + NADH + H(+). It functions in the pathway amino-acid degradation; L-threonine degradation via oxydo-reductase pathway; glycine from L-threonine: step 1/2. Its function is as follows. Catalyzes the NAD(+)-dependent oxidation of L-threonine to 2-amino-3-ketobutyrate. The sequence is that of L-threonine 3-dehydrogenase from Deinococcus radiodurans (strain ATCC 13939 / DSM 20539 / JCM 16871 / CCUG 27074 / LMG 4051 / NBRC 15346 / NCIMB 9279 / VKM B-1422 / R1).